We begin with the raw amino-acid sequence, 315 residues long: Methionyl-tRNA formyltransferase (315 aa).

113-116 contributes to the (6S)-5,6,7,8-tetrahydrofolate binding site; the sequence is SLLP.

It belongs to the Fmt family.

The enzyme catalyses L-methionyl-tRNA(fMet) + (6R)-10-formyltetrahydrofolate = N-formyl-L-methionyl-tRNA(fMet) + (6S)-5,6,7,8-tetrahydrofolate + H(+). Functionally, attaches a formyl group to the free amino group of methionyl-tRNA(fMet). The formyl group appears to play a dual role in the initiator identity of N-formylmethionyl-tRNA by promoting its recognition by IF2 and preventing the misappropriation of this tRNA by the elongation apparatus. The sequence is that of Methionyl-tRNA formyltransferase from Pectobacterium carotovorum subsp. carotovorum (strain PC1).